The sequence spans 390 residues: Protein phosphatase 1B (390 aa).

The segment covering 1–14 (MGAFLDKPKTEKHN) has biased composition (basic and acidic residues). The segment at 1 to 20 (MGAFLDKPKTEKHNAHGAGN) is disordered. A lipid anchor (N-myristoyl glycine) is attached at Gly2. Lys12 participates in a covalent cross-link: Glycyl lysine isopeptide (Lys-Gly) (interchain with G-Cter in ISG15). The PPM-type phosphatase domain maps to 23-295 (RYGLSSMQGW…DNMSVVLVCF (273 aa)). Asp60, Gly61, Asp243, and Asp286 together coordinate Mn(2+). Positions 371–390 (NPHKDNDGGAGDLEDSLVAL) are disordered. Ser386 is subject to Phosphoserine.

This sequence belongs to the PP2C family. In terms of assembly, monomer. Interacts with PAK6. Interacts with the phosphorylated form of IKBKB/IKKB. Mg(2+) is required as a cofactor. The cofactor is Mn(2+). Isgylation negatively regulates its activity. Post-translationally, N-myristoylation is essential for the recognition of its substrates for dephosphorylation. As to expression, isoform 1: Expressed ubiquitously. Isoform 2: Expressed exclusively in testis and intestine. Isoform 3: Expressed exclusively in brain and intestine. Isoform 4: Expressed exclusively in testis and intestine.

It localises to the cytoplasm. The protein resides in the cytosol. Its subcellular location is the membrane. It carries out the reaction O-phospho-L-seryl-[protein] + H2O = L-seryl-[protein] + phosphate. The enzyme catalyses O-phospho-L-threonyl-[protein] + H2O = L-threonyl-[protein] + phosphate. Its function is as follows. Enzyme with a broad specificity. Dephosphorylates PRKAA1 and PRKAA2. Inhibits TBK1-mediated antiviral signaling by dephosphorylating it at 'Ser-172'. Plays an important role in the termination of TNF-alpha-mediated NF-kappa-B activation through dephosphorylating and inactivating IKBKB/IKKB. In Mus musculus (Mouse), this protein is Protein phosphatase 1B (Ppm1b).